Reading from the N-terminus, the 634-residue chain is 3-dehydroshikimate dehydratase (634 aa).

Positions 134, 165, 191, and 239 each coordinate a divalent metal cation. VOC domains follow at residues 295 to 414 and 440 to 590; these read GIEF…LVER and RVDH…VFTE. Residues His443, His521, and Glu599 each coordinate Mg(2+).

Belongs to the bacterial two-domain DSD family. In terms of assembly, homodimer. The cofactor is Co(2+). Requires Ni(2+) as cofactor. Mg(2+) serves as cofactor. It depends on Mn(2+) as a cofactor.

The catalysed reaction is 3-dehydroshikimate = 3,4-dihydroxybenzoate + H2O. It participates in aromatic compound metabolism; 3,4-dihydroxybenzoate biosynthesis. Catalyzes the conversion of 3-dehydroshikimate to protocatechuate (3,4-dihydroxybenzoate), a common intermediate of quinate and shikimate degradation pathways. Is required for growth on either quinate or shikimate as a sole carbon source. The sequence is that of 3-dehydroshikimate dehydratase from Pseudomonas aeruginosa (strain ATCC 15692 / DSM 22644 / CIP 104116 / JCM 14847 / LMG 12228 / 1C / PRS 101 / PAO1).